The chain runs to 379 residues: Carbamoyl phosphate synthase small chain (379 aa).

A CPSase region spans residues 1-189 (MSKSALLVLE…GLPEAKDDSE (189 aa)). L-glutamine-binding residues include S47, G241, and G243. In terms of domain architecture, Glutamine amidotransferase type-1 spans 193-379 (HVVAYDFGAK…FIELIKQHSA (187 aa)). C269 (nucleophile) is an active-site residue. The L-glutamine site is built by L270, Q273, N311, G313, and F314. Catalysis depends on residues H353 and E355.

The protein belongs to the CarA family. Composed of two chains; the small (or glutamine) chain promotes the hydrolysis of glutamine to ammonia, which is used by the large (or ammonia) chain to synthesize carbamoyl phosphate. Tetramer of heterodimers (alpha,beta)4.

The catalysed reaction is hydrogencarbonate + L-glutamine + 2 ATP + H2O = carbamoyl phosphate + L-glutamate + 2 ADP + phosphate + 2 H(+). It catalyses the reaction L-glutamine + H2O = L-glutamate + NH4(+). The protein operates within amino-acid biosynthesis; L-arginine biosynthesis; carbamoyl phosphate from bicarbonate: step 1/1. It participates in pyrimidine metabolism; UMP biosynthesis via de novo pathway; (S)-dihydroorotate from bicarbonate: step 1/3. In terms of biological role, small subunit of the glutamine-dependent carbamoyl phosphate synthetase (CPSase). CPSase catalyzes the formation of carbamoyl phosphate from the ammonia moiety of glutamine, carbonate, and phosphate donated by ATP, constituting the first step of 2 biosynthetic pathways, one leading to arginine and/or urea and the other to pyrimidine nucleotides. The small subunit (glutamine amidotransferase) binds and cleaves glutamine to supply the large subunit with the substrate ammonia. This is Carbamoyl phosphate synthase small chain from Vibrio vulnificus (strain YJ016).